An 835-amino-acid polypeptide reads, in one-letter code: Ubiquitin carboxyl-terminal hydrolase 26 (835 aa).

A disordered region spans residues 102–128 (SQGSIRPARSDERCGEPSTSAQELNGS). Positions 118 to 128 (PSTSAQELNGS) are enriched in polar residues. The region spanning 286 to 816 (QGLPNVGNTC…TGYVFFYMHN (531 aa)) is the USP domain. The Nucleophile role is filled by Cys-295. The disordered stretch occupies residues 597–747 (NRESEAQSGK…TRKVDPTKLN (151 aa)). Composition is skewed to basic and acidic residues over residues 634 to 652 (LTKE…RPSD) and 669 to 679 (KCNEGRSDKQI). Residues 683 to 708 (ALTQSRPKPISQEQTENLGKTTLSHT) are compositionally biased toward polar residues. Over residues 709 to 725 (QDSSQSSQSSSDSSKSS) the composition is skewed to low complexity. The segment covering 726 to 747 (RCSDDLDKKAKPTRKVDPTKLN) has biased composition (basic and acidic residues). His-771 functions as the Proton acceptor in the catalytic mechanism.

It belongs to the peptidase C19 family. In terms of assembly, interacts with RING1.

It localises to the nucleus. It is found in the cytoplasm. The protein localises to the cytoskeleton. The protein resides in the flagellum axoneme. It catalyses the reaction Thiol-dependent hydrolysis of ester, thioester, amide, peptide and isopeptide bonds formed by the C-terminal Gly of ubiquitin (a 76-residue protein attached to proteins as an intracellular targeting signal).. In terms of biological role, deubiquitinase regulating several biological processes through the deubiquitination of components of these processes. Involved in somatic cell reprogramming through the 'Lys-48'-linked deubiquitination and stabilization of CBX4 and CBX6, two components of the polycomb-repressive complex 1 (PRC1). Also deubiquitinates and probably stabilizes the androgen receptor (AR), regulating the androgen receptor signaling pathway. May play a role in spermatogenesis. This Mus musculus (Mouse) protein is Ubiquitin carboxyl-terminal hydrolase 26.